The primary structure comprises 207 residues: U1 small nuclear ribonucleoprotein C (207 aa).

The Matrin-type zinc-finger motif lies at 4-36 (YYCDYCDTYLTHDSPSVRKQHNAGYKHKANVRI). Pro residues-rich tracts occupy residues 105-115 (PPQGYMPPPGV) and 122-131 (PGAPLPPPPQ). Residues 105-207 (PPQGYMPPPG…PSAESPESNE (103 aa)) are disordered. Positions 132 to 144 (NGILRPPGMAPIP) are enriched in low complexity. Pro residues predominate over residues 162 to 183 (GPPPNYNGLPPPPPYHTNPAAP). The segment covering 184–207 (PSGNFNNPNLNNPNPSAESPESNE) has biased composition (low complexity).

The protein belongs to the U1 small nuclear ribonucleoprotein C family. As to quaternary structure, U1 snRNP is composed of the 7 core Sm proteins B/B', D1, D2, D3, E, F and G that assemble in a heptameric protein ring on the Sm site of the small nuclear RNA to form the core snRNP, and at least 3 U1 snRNP-specific proteins U1-70K, U1-A and U1-C. U1-C interacts with U1 snRNA and the 5' splice-site region of the pre-mRNA.

It is found in the nucleus. Component of the spliceosomal U1 snRNP, which is essential for recognition of the pre-mRNA 5' splice-site and the subsequent assembly of the spliceosome. U1-C is directly involved in initial 5' splice-site recognition for both constitutive and regulated alternative splicing. The interaction with the 5' splice-site seems to precede base-pairing between the pre-mRNA and the U1 snRNA. Stimulates commitment or early (E) complex formation by stabilizing the base pairing of the 5' end of the U1 snRNA and the 5' splice-site region. The sequence is that of U1 small nuclear ribonucleoprotein C from Arabidopsis thaliana (Mouse-ear cress).